Reading from the N-terminus, the 405-residue chain is Tryptophan synthase beta chain (405 aa).

K98 carries the N6-(pyridoxal phosphate)lysine modification.

It belongs to the TrpB family. Tetramer of two alpha and two beta chains. It depends on pyridoxal 5'-phosphate as a cofactor.

The enzyme catalyses (1S,2R)-1-C-(indol-3-yl)glycerol 3-phosphate + L-serine = D-glyceraldehyde 3-phosphate + L-tryptophan + H2O. Its pathway is amino-acid biosynthesis; L-tryptophan biosynthesis; L-tryptophan from chorismate: step 5/5. Its function is as follows. The beta subunit is responsible for the synthesis of L-tryptophan from indole and L-serine. This chain is Tryptophan synthase beta chain, found in Xanthomonas campestris pv. campestris (strain 8004).